Reading from the N-terminus, the 821-residue chain is Leucine--tRNA ligase (821 aa).

Residues 40–50 carry the 'HIGH' region motif; sequence PYPSGRIHMGH. A 'KMSKS' region motif is present at residues 586-590; that stretch reads KMSKS. K589 is a binding site for ATP.

It belongs to the class-I aminoacyl-tRNA synthetase family.

Its subcellular location is the cytoplasm. It catalyses the reaction tRNA(Leu) + L-leucine + ATP = L-leucyl-tRNA(Leu) + AMP + diphosphate. The chain is Leucine--tRNA ligase from Aliarcobacter butzleri (strain RM4018) (Arcobacter butzleri).